Here is a 90-residue protein sequence, read N- to C-terminus: Small ribosomal subunit protein uS15c (90 aa).

The protein belongs to the universal ribosomal protein uS15 family. Part of the 30S ribosomal subunit.

The protein resides in the plastid. It localises to the chloroplast. The chain is Small ribosomal subunit protein uS15c (rps15) from Populus alba (White poplar).